The chain runs to 512 residues: Serine/threonine-protein kinase grp (512 aa).

The Protein kinase domain maps to W22 to C279. ATP is bound by residues L28 to V36 and K51. D143 functions as the Proton acceptor in the catalytic mechanism. Residues P335–Q360 form a disordered region.

Belongs to the protein kinase superfamily. CAMK Ser/Thr protein kinase family. NIM1 subfamily. Post-translationally, phosphorylated in a MEI-41/ATR dependent manner in response to DNA damage or the presence of unreplicated DNA.

It localises to the nucleus. It catalyses the reaction L-seryl-[protein] + ATP = O-phospho-L-seryl-[protein] + ADP + H(+). It carries out the reaction L-threonyl-[protein] + ATP = O-phospho-L-threonyl-[protein] + ADP + H(+). In terms of biological role, serine/threonine-protein kinase which is required for checkpoint-mediated cell cycle arrest and activation of DNA repair in response to the presence of DNA damage or unreplicated DNA. May also negatively regulate cell cycle progression during unperturbed cell cycles. May phosphorylate the CDC25 phosphatase stg, which promotes its degradation. This results in increased inhibitory tyrosine phosphorylation of Cdk1-cyclin complexes and consequent inhibition of cell cycle progression. In Drosophila melanogaster (Fruit fly), this protein is Serine/threonine-protein kinase grp.